A 169-amino-acid polypeptide reads, in one-letter code: Ubiquitin-conjugating enzyme E2 2 (169 aa).

The UBC core domain occupies 4–150 (AAKRRLIRDF…VKKTVELSWV (147 aa)). C88 acts as the Glycyl thioester intermediate in catalysis.

The protein belongs to the ubiquitin-conjugating enzyme family.

It localises to the cytoplasm. The protein resides in the nucleus. The enzyme catalyses S-ubiquitinyl-[E1 ubiquitin-activating enzyme]-L-cysteine + [E2 ubiquitin-conjugating enzyme]-L-cysteine = [E1 ubiquitin-activating enzyme]-L-cysteine + S-ubiquitinyl-[E2 ubiquitin-conjugating enzyme]-L-cysteine.. It functions in the pathway protein modification; protein ubiquitination. In terms of biological role, catalyzes the covalent attachment of ubiquitin to other proteins. Plays a role in transcription regulation by catalyzing the monoubiquitination of histone H2B to form H2BK123ub1. H2BK123ub1 gives a specific tag for epigenetic transcriptional activation and is also a prerequisite for H3K4me and H3K79me formation. Also involved in postreplication repair of UV-damaged DNA, in N-end rule-dependent protein degradation and in sporulation. This Cryptococcus neoformans var. neoformans serotype D (strain B-3501A) (Filobasidiella neoformans) protein is Ubiquitin-conjugating enzyme E2 2 (UBC2).